The primary structure comprises 422 residues: Glucose-1-phosphate adenylyltransferase 2 (422 aa).

Alpha-D-glucose 1-phosphate contacts are provided by residues Y110, G175, 190–191, and S208; that span reads EK.

Belongs to the bacterial/plant glucose-1-phosphate adenylyltransferase family. As to quaternary structure, homotetramer.

The catalysed reaction is alpha-D-glucose 1-phosphate + ATP + H(+) = ADP-alpha-D-glucose + diphosphate. It functions in the pathway glycan biosynthesis; glycogen biosynthesis. Its function is as follows. Involved in the biosynthesis of ADP-glucose, a building block required for the elongation reactions to produce glycogen. Catalyzes the reaction between ATP and alpha-D-glucose 1-phosphate (G1P) to produce pyrophosphate and ADP-Glc. The chain is Glucose-1-phosphate adenylyltransferase 2 from Alkalilimnicola ehrlichii (strain ATCC BAA-1101 / DSM 17681 / MLHE-1).